Consider the following 156-residue polypeptide: Aspartate 1-decarboxylase (156 aa).

Ser26 serves as the catalytic Schiff-base intermediate with substrate; via pyruvic acid. Ser26 is subject to Pyruvic acid (Ser). A substrate-binding site is contributed by Thr58. The Proton donor role is filled by Tyr59. 74-76 contacts substrate; sequence GGA.

Belongs to the PanD family. In terms of assembly, heterooctamer of four alpha and four beta subunits. Pyruvate is required as a cofactor. Post-translationally, is synthesized initially as an inactive proenzyme, which is activated by self-cleavage at a specific serine bond to produce a beta-subunit with a hydroxyl group at its C-terminus and an alpha-subunit with a pyruvoyl group at its N-terminus.

Its subcellular location is the cytoplasm. The catalysed reaction is L-aspartate + H(+) = beta-alanine + CO2. It participates in cofactor biosynthesis; (R)-pantothenate biosynthesis; beta-alanine from L-aspartate: step 1/1. Functionally, catalyzes the pyruvoyl-dependent decarboxylation of aspartate to produce beta-alanine. In Gloeothece citriformis (strain PCC 7424) (Cyanothece sp. (strain PCC 7424)), this protein is Aspartate 1-decarboxylase.